The chain runs to 172 residues: Shikimate kinase (172 aa).

14–19 provides a ligand contact to ATP; it reads GAGKST. Serine 18 is a binding site for Mg(2+). Positions 36, 60, and 82 each coordinate substrate. ATP is bound at residue arginine 120. Arginine 140 is a substrate binding site. Residue glutamine 157 participates in ATP binding.

This sequence belongs to the shikimate kinase family. In terms of assembly, monomer. Requires Mg(2+) as cofactor.

It localises to the cytoplasm. The enzyme catalyses shikimate + ATP = 3-phosphoshikimate + ADP + H(+). Its pathway is metabolic intermediate biosynthesis; chorismate biosynthesis; chorismate from D-erythrose 4-phosphate and phosphoenolpyruvate: step 5/7. Functionally, catalyzes the specific phosphorylation of the 3-hydroxyl group of shikimic acid using ATP as a cosubstrate. This chain is Shikimate kinase, found in Pseudoalteromonas translucida (strain TAC 125).